We begin with the raw amino-acid sequence, 658 residues long: Probable methyl-accepting chemotaxis protein BT9727_0469 (658 aa).

Topologically, residues 1–14 (MLQGKLRRSSLKAK) are cytoplasmic. The helical transmembrane segment at 15 to 35 (LLVSFVIVLILPSIVIGWTSY) threads the bilayer. The Extracellular portion of the chain corresponds to 36–283 (QQAKTNFNET…ANPIFYKTLT (248 aa)). Positions 44 to 109 (ETILQSAEDN…NKLHPEIEAI (66 aa)) form a coiled coil. In terms of domain architecture, Cache spans 150–221 (ITAPYKSSTT…AHPTMKPGDK (72 aa)). A helical transmembrane segment spans residues 284 to 304 (VIGISLIIGGVLIYFIIASII). The HAMP domain maps to 301 to 353 (ASIISPLKQLVISSKKISEGDLTETITVHSKDEIGQLGESFNEMAASLHHVIS). The Cytoplasmic segment spans residues 305-658 (SPLKQLVISS…LQEMIGKFKV (354 aa)). Residue Glu-368 is modified to Glutamate methyl ester (Glu). A Methyl-accepting transducer domain is found at 372–622 (SMKQTSEATE…ENAASVQNIA (251 aa)). The residue at position 592 (Gln-592) is a Deamidated glutamine. The residue at position 592 (Gln-592) is a Glutamate methyl ester (Gln). Residues Glu-627 and Glu-634 each carry the glutamate methyl ester (Glu) modification.

This sequence belongs to the methyl-accepting chemotaxis (MCP) protein family.

Its subcellular location is the cell membrane. Its function is as follows. Chemotactic-signal transducers respond to changes in the concentration of attractants and repellents in the environment, transduce a signal from the outside to the inside of the cell, and facilitate sensory adaptation through the variation of the level of methylation. The protein is Probable methyl-accepting chemotaxis protein BT9727_0469 of Bacillus thuringiensis subsp. konkukian (strain 97-27).